The chain runs to 362 residues: Chorismate synthase (362 aa).

NADP(+) is bound at residue arginine 47. Residues 124–126 (RAS), glycine 286, 301–305 (KPTAT), and arginine 327 each bind FMN.

The protein belongs to the chorismate synthase family. Homotetramer. FMNH2 is required as a cofactor.

It catalyses the reaction 5-O-(1-carboxyvinyl)-3-phosphoshikimate = chorismate + phosphate. The protein operates within metabolic intermediate biosynthesis; chorismate biosynthesis; chorismate from D-erythrose 4-phosphate and phosphoenolpyruvate: step 7/7. Its function is as follows. Catalyzes the anti-1,4-elimination of the C-3 phosphate and the C-6 proR hydrogen from 5-enolpyruvylshikimate-3-phosphate (EPSP) to yield chorismate, which is the branch point compound that serves as the starting substrate for the three terminal pathways of aromatic amino acid biosynthesis. This reaction introduces a second double bond into the aromatic ring system. The polypeptide is Chorismate synthase (Synechococcus sp. (strain WH7803)).